Reading from the N-terminus, the 58-residue chain is SPbeta prophage-derived uncharacterized protein YonT (58 aa).

Residues 6–26 form a helical membrane-spanning segment; that stretch reads GIVVAFLISLTVLTINSLTIV. The interval 35–58 is disordered; it reads GTSKKKKRIRKRLRPKRQRQRIRR. Residues 36 to 58 show a composition bias toward basic residues; sequence TSKKKKRIRKRLRPKRQRQRIRR.

Its subcellular location is the cell membrane. The sequence is that of SPbeta prophage-derived uncharacterized protein YonT (yonT) from Bacillus subtilis (strain 168).